Reading from the N-terminus, the 779-residue chain is Probable ATP-dependent RNA helicase DHX40 (779 aa).

A disordered region spans residues 1-53; that stretch reads MSRFPAVAGRAPRRQEEGERSRDLQEERPSAVCIADREEKGCTSQEGGTTPTF. Positions 13-41 are enriched in basic and acidic residues; that stretch reads RRQEEGERSRDLQEERPSAVCIADREEKG. Residues 42-53 are compositionally biased toward polar residues; sequence CTSQEGGTTPTF. The 169-residue stretch at 63–231 folds into the Helicase ATP-binding domain; the sequence is IQAVRDNSFL…FGNCPIFDIP (169 aa). 76–83 is a binding site for ATP; it reads GNTGSGKT. A DEAH box motif is present at residues 173–176; it reads DEAH. A Helicase C-terminal domain is found at 263 to 442; sequence TMDIHLNEMA…SVVLTLKCLA (180 aa). The interval 737 to 779 is disordered; that stretch reads SKDVLKKMQRRNDDKSISDARARFLERKQQRTQDHSDTRKETG.

Belongs to the DEAD box helicase family. DEAH subfamily.

It carries out the reaction ATP + H2O = ADP + phosphate + H(+). Probable ATP-dependent RNA helicase. The sequence is that of Probable ATP-dependent RNA helicase DHX40 (DHX40) from Pongo abelii (Sumatran orangutan).